A 361-amino-acid chain; its full sequence is Probable dual-specificity RNA methyltransferase RlmN (361 aa).

E102 functions as the Proton acceptor in the catalytic mechanism. In terms of domain architecture, Radical SAM core spans 108 to 344 (SGDRLTVCVS…VRWSKGLGAD (237 aa)). C115 and C347 are oxidised to a cystine. [4Fe-4S] cluster contacts are provided by C122, C126, and C129. Residues 169–170 (GE), S199, 228–230 (SLH), and N304 each bind S-adenosyl-L-methionine. C347 functions as the S-methylcysteine intermediate in the catalytic mechanism.

Belongs to the radical SAM superfamily. RlmN family. [4Fe-4S] cluster serves as cofactor.

The protein resides in the cytoplasm. The enzyme catalyses adenosine(2503) in 23S rRNA + 2 reduced [2Fe-2S]-[ferredoxin] + 2 S-adenosyl-L-methionine = 2-methyladenosine(2503) in 23S rRNA + 5'-deoxyadenosine + L-methionine + 2 oxidized [2Fe-2S]-[ferredoxin] + S-adenosyl-L-homocysteine. The catalysed reaction is adenosine(37) in tRNA + 2 reduced [2Fe-2S]-[ferredoxin] + 2 S-adenosyl-L-methionine = 2-methyladenosine(37) in tRNA + 5'-deoxyadenosine + L-methionine + 2 oxidized [2Fe-2S]-[ferredoxin] + S-adenosyl-L-homocysteine. Functionally, specifically methylates position 2 of adenine 2503 in 23S rRNA and position 2 of adenine 37 in tRNAs. The polypeptide is Probable dual-specificity RNA methyltransferase RlmN (Synechococcus elongatus (strain ATCC 33912 / PCC 7942 / FACHB-805) (Anacystis nidulans R2)).